The chain runs to 384 residues: Anhydro-N-acetylmuramic acid kinase (384 aa).

ATP is bound at residue 9 to 16 (GTSYDAID).

Belongs to the anhydro-N-acetylmuramic acid kinase family.

The catalysed reaction is 1,6-anhydro-N-acetyl-beta-muramate + ATP + H2O = N-acetyl-D-muramate 6-phosphate + ADP + H(+). It participates in amino-sugar metabolism; 1,6-anhydro-N-acetylmuramate degradation. It functions in the pathway cell wall biogenesis; peptidoglycan recycling. Catalyzes the specific phosphorylation of 1,6-anhydro-N-acetylmuramic acid (anhMurNAc) with the simultaneous cleavage of the 1,6-anhydro ring, generating MurNAc-6-P. Is required for the utilization of anhMurNAc either imported from the medium or derived from its own cell wall murein, and thus plays a role in cell wall recycling. This chain is Anhydro-N-acetylmuramic acid kinase, found in Streptomyces avermitilis (strain ATCC 31267 / DSM 46492 / JCM 5070 / NBRC 14893 / NCIMB 12804 / NRRL 8165 / MA-4680).